We begin with the raw amino-acid sequence, 66 residues long: Phylloseptin-S6 (66 aa).

Positions 1–22 (MAFLKKSLFLVLFLGLVSLSIC) are cleaved as a signal peptide. Residues 23–46 (EEEKRETEEEEHDQEEDDKSEEKR) constitute a propeptide that is removed on maturation. The tract at residues 25-44 (EKRETEEEEHDQEEDDKSEE) is disordered. Residues 30–41 (EEEEHDQEEDDK) are compositionally biased toward acidic residues. Leucine 65 carries the post-translational modification Leucine amide.

Belongs to the frog skin active peptide (FSAP) family. Phylloseptin subfamily. In terms of tissue distribution, expressed by the skin glands.

Its subcellular location is the secreted. The protein resides in the target cell membrane. In terms of biological role, antimicrobial peptide with high activity against Gram-positive bacteria, low activity against Gram-negative bacteria, and moderate activity against fungi. Acts by causing bacterial membrane disruption inducing leakage of the intracellular content followed by cell death. It adopts an alpha-helical amphipathic structure in membrane environments. Also shows highly potent antiparasitic activity against Leishmania species. Shows moderate hemolytic activity on human erythrocytes. Is also active on human monocytes. In Phyllomedusa sauvagei (Sauvage's leaf frog), this protein is Phylloseptin-S6.